The chain runs to 341 residues: MSVLDALWEDRDVRFDLSSQQMKTRPGEVLIDCLDSIEDTKGNNGDRGRLLVTNLRILWHSLALSRVNVSVGYNCILNITTRTANSKLRGQTEALYILTKCNSTRFEFIFTNLVPGSPRLFTSVMAVHRAYETSKMYRDFKLRSALIQNKQLRLLPQEHVYDKINGVWNLSSDQGNLGTFFITNVRIVWHANMNDSFNVSIPYLQIRSIKIRDSKFGLALVIESSQQSGGYVLGFKIDPVEKLQESVKEINSLHKVYSASPIFGVDYEMEEKPQPLEALTVEQIQDDVEIDSDDHTDAFVAYFADGNKQQDREPVFSEELGLAIEKLKDGFTLQGLWEVMS.

This sequence belongs to the BBS5 family. As to quaternary structure, part of BBSome complex, that contains BBS1, BBS2, BBS4, BBS5, BBS7, BBS8/TTC8, BBS9 and BBIP10. Binds to phosphoinositides. Interacts with CCDC28B. Interacts with SMO; the interaction is indicative for the association of SMO with the BBsome complex to facilitate ciliary localization of SMO. Interacts with PKD1. Interacts with DLEC1.

The protein resides in the cell projection. It is found in the cilium membrane. Its subcellular location is the cytoplasm. The protein localises to the cytoskeleton. It localises to the cilium basal body. The protein resides in the microtubule organizing center. It is found in the centrosome. Its subcellular location is the centriolar satellite. The BBSome complex is thought to function as a coat complex required for sorting of specific membrane proteins to the primary cilia. The BBSome complex is required for ciliogenesis but is dispensable for centriolar satellite function. This ciliogenic function is mediated in part by the Rab8 GDP/GTP exchange factor, which localizes to the basal body and contacts the BBSome. Rab8(GTP) enters the primary cilium and promotes extension of the ciliary membrane. Firstly the BBSome associates with the ciliary membrane and binds to RAB3IP/Rabin8, the guanosyl exchange factor (GEF) for Rab8 and then the Rab8-GTP localizes to the cilium and promotes docking and fusion of carrier vesicles to the base of the ciliary membrane. The BBSome complex, together with the LTZL1, controls SMO ciliary trafficking and contributes to the sonic hedgehog (SHH) pathway regulation. Required for BBSome complex ciliary localization but not for the proper complex assembly. The polypeptide is BBSome complex member BBS5 (BBS5) (Macaca fascicularis (Crab-eating macaque)).